We begin with the raw amino-acid sequence, 397 residues long: MKKLTIKDIDLSNKAVIMRVDFNVPIGKDGKVSDDTRITAALPTIKYAVEKKAKVILLSHLGRPKGSFDPKYSLKPIAEHLKNISGLNVIFVPHVVGEEVKEAVKNMKVGDVLLLENTRFHPGEEKNDQELAKAWAELADIHVNDAFGTAHRAHASNVGIANFIPSVAGFLMEKEIDFLNKVTYEPDHPYVVVLGGAKVSDKIGVITNLLNKADKLLIGGAMMFTFLKAQGLKVGSSLVENDKLDLAKQILEQAKEKKVEIVLPVDAIVAQKIEAGVEKKTADLKDGIDDGWMGLDIGPKTIKVFEEALKNAKTVVWNGPMGVFEIEDFAGGTKAVAEMIAKIKGTTVIGGGDSAAAVAKFGLESAYSHVSTGGGASLEFLEGKDLPGIRSIADKKK.

Residues 21-23 (DFN), R37, 60-63 (HLGR), R119, and R152 each bind substrate. ATP contacts are provided by residues K202, G294, E325, and 351–354 (GGDS).

It belongs to the phosphoglycerate kinase family. In terms of assembly, monomer.

It localises to the cytoplasm. The catalysed reaction is (2R)-3-phosphoglycerate + ATP = (2R)-3-phospho-glyceroyl phosphate + ADP. The protein operates within carbohydrate degradation; glycolysis; pyruvate from D-glyceraldehyde 3-phosphate: step 2/5. In Pseudothermotoga lettingae (strain ATCC BAA-301 / DSM 14385 / NBRC 107922 / TMO) (Thermotoga lettingae), this protein is Phosphoglycerate kinase.